Here is a 367-residue protein sequence, read N- to C-terminus: uncharacterized protein (367 aa).

4 helical membrane passes run I18 to G38, V239 to G259, I296 to I316, and A329 to L349.

The protein belongs to the ABC-4 integral membrane protein family.

The protein resides in the cell membrane. This is an uncharacterized protein from Methanocaldococcus jannaschii (strain ATCC 43067 / DSM 2661 / JAL-1 / JCM 10045 / NBRC 100440) (Methanococcus jannaschii).